A 185-amino-acid chain; its full sequence is Elongation factor P (185 aa).

The protein belongs to the elongation factor P family.

It is found in the cytoplasm. Its pathway is protein biosynthesis; polypeptide chain elongation. Involved in peptide bond synthesis. Stimulates efficient translation and peptide-bond synthesis on native or reconstituted 70S ribosomes in vitro. Probably functions indirectly by altering the affinity of the ribosome for aminoacyl-tRNA, thus increasing their reactivity as acceptors for peptidyl transferase. The polypeptide is Elongation factor P (Pelotomaculum thermopropionicum (strain DSM 13744 / JCM 10971 / SI)).